Consider the following 659-residue polypeptide: DNA ligase (659 aa).

NAD(+)-binding positions include 32–36 (DQQYD), 81–82 (SL), and E110. K112 (N6-AMP-lysine intermediate) is an active-site residue. The NAD(+) site is built by R133, E167, K282, and K306. Zn(2+) contacts are provided by C399, C402, C415, and C420. Residues 582–659 (IKNNIFKNKK…QEHEFEELIK (78 aa)) enclose the BRCT domain.

It belongs to the NAD-dependent DNA ligase family. LigA subfamily. Mg(2+) serves as cofactor. It depends on Mn(2+) as a cofactor.

It catalyses the reaction NAD(+) + (deoxyribonucleotide)n-3'-hydroxyl + 5'-phospho-(deoxyribonucleotide)m = (deoxyribonucleotide)n+m + AMP + beta-nicotinamide D-nucleotide.. Its function is as follows. DNA ligase that catalyzes the formation of phosphodiester linkages between 5'-phosphoryl and 3'-hydroxyl groups in double-stranded DNA using NAD as a coenzyme and as the energy source for the reaction. It is essential for DNA replication and repair of damaged DNA. In Phytoplasma mali (strain AT), this protein is DNA ligase.